The chain runs to 566 residues: Developmental regulatory protein wetA (566 aa).

5 disordered regions span residues 116 to 174, 232 to 316, 334 to 364, 381 to 400, and 429 to 542; these read VPAV…LMRP, STEG…SDSL, AWWPSMPSRVPRQPSYQHVVSSPAPQRSIQS, SSFDGSTSADPSFSSVVTSA, and PPVQ…RRRK. Composition is skewed to polar residues over residues 165-174 and 269-291; these read QSFSPSLMRP and AQQQQHNYLSQSNNSTMATSSPP. The segment covering 298–316 has biased composition (low complexity); it reads SSPHSSDPQSLSSWHSDSL. Polar residues-rich tracts occupy residues 347 to 364 and 381 to 398; these read PSYQHVVSSPAPQRSIQS and SSFDGSTSADPSFSSVVT. Positions 435–448 are enriched in low complexity; that stretch reads SRSPSLSPRGRGSP. Residues 449–462 are compositionally biased toward polar residues; sequence TQGSPLRNEASTKT. The segment covering 463–473 has biased composition (basic residues); the sequence is SPHRRGYHGRK. Over residues 482–500 the composition is skewed to low complexity; sequence PKPVKGPNSSSPGSGSNKS. Positions 501-511 are enriched in polar residues; the sequence is LTVSFVNFTPN.

It belongs to the wetA family.

BrlA, abaA and wetA are pivotal regulators of conidiophore development and conidium maturation. They act individually and together to regulate their own expression and that of numerous other sporulation-specific genes. Plays an essential role in the completion of conidial maturation and is essential for trehalose biogenesis in conidia. Negatively regulates expression of the melanin biosynthetic gene cluster. Also plays an a role in the early phase of fungal growth including proper hyphal branching. This Aspergillus fumigatus (strain ATCC MYA-4609 / CBS 101355 / FGSC A1100 / Af293) (Neosartorya fumigata) protein is Developmental regulatory protein wetA.